Here is a 927-residue protein sequence, read N- to C-terminus: Dual serine/threonine and tyrosine protein kinase (927 aa).

The interval 1–21 (MEADGQSWAGESVSGPGPGGG) is disordered. The stretch at 393–429 (RKKENELYESLMNIANRKQEEMKDMIVETLNTMKEEL) forms a coiled coil. Positions 650 to 904 (PKLGQELGRG…PLLGIVQPML (255 aa)) constitute a Protein kinase domain. ATP-binding positions include 656–664 (LGRGQYGVV) and Lys-679. Asp-775 acts as the Proton acceptor in catalysis.

Belongs to the protein kinase superfamily. Ser/Thr protein kinase family. As to expression, expressed in brain, heart, skeletal muscle, kidney and lung. Expressed in maturing tubular epithelia, with the most prominent expression in the medulla and the papilla. Expressed in thin ascending limb of the loop of Henle and the distal convoluted tubule. Expressed in all layers of transitional ureteric epithelium and in the ureteric smooth-muscle cells (at protein level). Widely expressed. Highly expressed in many brain regions, including in cerebellum, olfactory, hippocampus and cerebral cortex.

Its subcellular location is the cytoplasm. The protein localises to the cell membrane. It localises to the apical cell membrane. It is found in the basolateral cell membrane. The protein resides in the cell junction. It carries out the reaction L-seryl-[protein] + ATP = O-phospho-L-seryl-[protein] + ADP + H(+). The catalysed reaction is L-threonyl-[protein] + ATP = O-phospho-L-threonyl-[protein] + ADP + H(+). It catalyses the reaction L-tyrosyl-[protein] + ATP = O-phospho-L-tyrosyl-[protein] + ADP + H(+). Functionally, acts as a positive regulator of ERK phosphorylation downstream of fibroblast growth factor-receptor activation. Involved in the regulation of both caspase-dependent apoptosis and caspase-independent cell death. In the skin, it plays a predominant role in suppressing caspase-dependent apoptosis in response to UV stress in a range of dermal cell types. In Mus musculus (Mouse), this protein is Dual serine/threonine and tyrosine protein kinase (Dstyk).